The following is a 289-amino-acid chain: Serine/threonine-protein phosphatase Pgam5, mitochondrial (289 aa).

The helical transmembrane segment at 7–23 (FVCGTGAGLAAYYLQRL) threads the bilayer.

This sequence belongs to the phosphoglycerate mutase family. BPG-dependent PGAM subfamily. In terms of assembly, interacts with Pk92B/ASK1.

The protein localises to the mitochondrion outer membrane. The catalysed reaction is O-phospho-L-seryl-[protein] + H2O = L-seryl-[protein] + phosphate. It catalyses the reaction O-phospho-L-threonyl-[protein] + H2O = L-threonyl-[protein] + phosphate. Its function is as follows. Displays phosphatase activity for serine/threonine residues, and dephosphorylates and activates Pk92B kinase. Has apparently no phosphoglycerate mutase activity. This Drosophila melanogaster (Fruit fly) protein is Serine/threonine-protein phosphatase Pgam5, mitochondrial (Pgam5).